The sequence spans 110 residues: Large ribosomal subunit protein uL22 (110 aa).

Belongs to the universal ribosomal protein uL22 family. Part of the 50S ribosomal subunit.

Its function is as follows. This protein binds specifically to 23S rRNA; its binding is stimulated by other ribosomal proteins, e.g. L4, L17, and L20. It is important during the early stages of 50S assembly. It makes multiple contacts with different domains of the 23S rRNA in the assembled 50S subunit and ribosome. Functionally, the globular domain of the protein is located near the polypeptide exit tunnel on the outside of the subunit, while an extended beta-hairpin is found that lines the wall of the exit tunnel in the center of the 70S ribosome. The polypeptide is Large ribosomal subunit protein uL22 (Yersinia enterocolitica serotype O:8 / biotype 1B (strain NCTC 13174 / 8081)).